We begin with the raw amino-acid sequence, 491 residues long: Glycogen synthase (491 aa).

R20 is a binding site for ADP-alpha-D-glucose.

It belongs to the glycosyltransferase 1 family. Bacterial/plant glycogen synthase subfamily.

It carries out the reaction [(1-&gt;4)-alpha-D-glucosyl](n) + ADP-alpha-D-glucose = [(1-&gt;4)-alpha-D-glucosyl](n+1) + ADP + H(+). It functions in the pathway glycan biosynthesis; glycogen biosynthesis. Synthesizes alpha-1,4-glucan chains using ADP-glucose. The protein is Glycogen synthase of Prosthecochloris aestuarii (strain DSM 271 / SK 413).